The primary structure comprises 237 residues: 6-carboxyhexanoate--CoA ligase (237 aa).

Belongs to the BioW family. Homodimer. Requires Mg(2+) as cofactor.

The catalysed reaction is heptanedioate + ATP + CoA = 6-carboxyhexanoyl-CoA + AMP + diphosphate. Its pathway is metabolic intermediate metabolism; pimeloyl-CoA biosynthesis; pimeloyl-CoA from pimelate: step 1/1. Catalyzes the transformation of pimelate into pimeloyl-CoA with concomitant hydrolysis of ATP to AMP. This chain is 6-carboxyhexanoate--CoA ligase, found in Methanocaldococcus jannaschii (strain ATCC 43067 / DSM 2661 / JAL-1 / JCM 10045 / NBRC 100440) (Methanococcus jannaschii).